The chain runs to 266 residues: uncharacterized protein (266 aa).

It belongs to the chlamydial CPn_0087/CT_309/TC_0583 family.

This is an uncharacterized protein from Chlamydia trachomatis serovar D (strain ATCC VR-885 / DSM 19411 / UW-3/Cx).